Here is a 571-residue protein sequence, read N- to C-terminus: Isthmin-2 (571 aa).

The first 26 residues, M1–G26, serve as a signal peptide directing secretion. 3 disordered regions span residues K30–E60, A116–E141, and E257–E294. A compositionally biased stretch (polar residues) spans A116–A131. A glycan (N-linked (GlcNAc...) asparagine) is linked at N117. A compositionally biased stretch (basic and acidic residues) spans E257–E268. Residues K269 to E294 show a composition bias toward acidic residues. N300 carries an N-linked (GlcNAc...) asparagine glycan. Residues E327–P371 enclose the TSP type-1 domain. Disulfide bonds link C338–C365, C342–C370, and C353–C357. N-linked (GlcNAc...) asparagine glycosylation is present at N392. One can recognise an AMOP domain in the interval M396–E559.

Belongs to the isthmin family. In terms of tissue distribution, expressed at high levels in the placenta and at moderate levels in the pancreas, kidney, heart, liver, lung, brain and skeletal muscle.

It is found in the secreted. In Homo sapiens (Human), this protein is Isthmin-2 (ISM2).